Consider the following 377-residue polypeptide: 4-hydroxy-3-methylbut-2-en-1-yl diphosphate synthase (flavodoxin) (377 aa).

[4Fe-4S] cluster contacts are provided by C275, C278, C310, and E317.

Belongs to the IspG family. [4Fe-4S] cluster is required as a cofactor.

It carries out the reaction (2E)-4-hydroxy-3-methylbut-2-enyl diphosphate + oxidized [flavodoxin] + H2O + 2 H(+) = 2-C-methyl-D-erythritol 2,4-cyclic diphosphate + reduced [flavodoxin]. The protein operates within isoprenoid biosynthesis; isopentenyl diphosphate biosynthesis via DXP pathway; isopentenyl diphosphate from 1-deoxy-D-xylulose 5-phosphate: step 5/6. Converts 2C-methyl-D-erythritol 2,4-cyclodiphosphate (ME-2,4cPP) into 1-hydroxy-2-methyl-2-(E)-butenyl 4-diphosphate. This Ruegeria sp. (strain TM1040) (Silicibacter sp.) protein is 4-hydroxy-3-methylbut-2-en-1-yl diphosphate synthase (flavodoxin).